The chain runs to 474 residues: UDP-N-acetylmuramate--L-alanine ligase (474 aa).

An ATP-binding site is contributed by 112–118 (GTHGKTT).

It belongs to the MurCDEF family.

The protein resides in the cytoplasm. It carries out the reaction UDP-N-acetyl-alpha-D-muramate + L-alanine + ATP = UDP-N-acetyl-alpha-D-muramoyl-L-alanine + ADP + phosphate + H(+). It participates in cell wall biogenesis; peptidoglycan biosynthesis. Cell wall formation. The sequence is that of UDP-N-acetylmuramate--L-alanine ligase from Cupriavidus taiwanensis (strain DSM 17343 / BCRC 17206 / CCUG 44338 / CIP 107171 / LMG 19424 / R1) (Ralstonia taiwanensis (strain LMG 19424)).